The following is a 267-amino-acid chain: Ras-related protein Rab-36 (267 aa).

GTP-binding residues include Val68, Gly69, Lys70, Thr71, Ser72, Asp83, Tyr86, and Thr89. Thr71 serves as a coordination point for Mg(2+). The short motif at 76–94 (RLCKNVFDHDYKATIGVDF) is the Switch 1 element. 2 residues coordinate Mg(2+): Thr89 and Asp112. Residues 113–132 (TAGQEKFKCIASAYYRGAQV) carry the Switch 2 motif. Gly115, Lys172, Asp174, Ser203, Ala204, and Lys205 together coordinate GTP. S-geranylgeranyl cysteine attachment occurs at residues Cys266 and Cys267.

This sequence belongs to the small GTPase superfamily. Rab family. Requires Mg(2+) as cofactor.

The protein localises to the golgi apparatus membrane. The catalysed reaction is GTP + H2O = GDP + phosphate + H(+). Regulated by guanine nucleotide exchange factors (GEFs) which promote the exchange of bound GDP for free GTP. Regulated by GTPase activating proteins (GAPs) which increase the GTP hydrolysis activity. Inhibited by GDP dissociation inhibitors (GDIs). In terms of biological role, the small GTPases Rab are key regulators of intracellular membrane trafficking, from the formation of transport vesicles to their fusion with membranes. Rabs cycle between an inactive GDP-bound form and an active GTP-bound form that is able to recruit to membranes different sets of downstream effectors directly responsible for vesicle formation, movement, tethering and fusion. This Mus musculus (Mouse) protein is Ras-related protein Rab-36.